A 368-amino-acid chain; its full sequence is Carbamoyl phosphate synthase small chain (368 aa).

The CPSase stretch occupies residues 1-178; that stretch reads MKAVLGLEDG…GAECAWKGSG (178 aa). S45, G230, and G232 together coordinate L-glutamine. Residues 182 to 368 enclose the Glutamine amidotransferase type-1 domain; it reads HAVVVDLGIK…KVVKVLGGDL (187 aa). The active-site Nucleophile is the C257. Positions 258, 261, 299, 301, and 302 each coordinate L-glutamine. Catalysis depends on residues H342 and E344.

This sequence belongs to the CarA family. Composed of two chains; the small (or glutamine) chain promotes the hydrolysis of glutamine to ammonia, which is used by the large (or ammonia) chain to synthesize carbamoyl phosphate. Tetramer of heterodimers (alpha,beta)4.

It catalyses the reaction hydrogencarbonate + L-glutamine + 2 ATP + H2O = carbamoyl phosphate + L-glutamate + 2 ADP + phosphate + 2 H(+). The catalysed reaction is L-glutamine + H2O = L-glutamate + NH4(+). It participates in amino-acid biosynthesis; L-arginine biosynthesis; carbamoyl phosphate from bicarbonate: step 1/1. The protein operates within pyrimidine metabolism; UMP biosynthesis via de novo pathway; (S)-dihydroorotate from bicarbonate: step 1/3. Functionally, small subunit of the glutamine-dependent carbamoyl phosphate synthetase (CPSase). CPSase catalyzes the formation of carbamoyl phosphate from the ammonia moiety of glutamine, carbonate, and phosphate donated by ATP, constituting the first step of 2 biosynthetic pathways, one leading to arginine and/or urea and the other to pyrimidine nucleotides. The small subunit (glutamine amidotransferase) binds and cleaves glutamine to supply the large subunit with the substrate ammonia. The protein is Carbamoyl phosphate synthase small chain of Methanosarcina acetivorans (strain ATCC 35395 / DSM 2834 / JCM 12185 / C2A).